The following is a 283-amino-acid chain: Probable protein phosphatase 2C 17 (283 aa).

The 251-residue stretch at 32–282 (KYGFSLIKGK…DDISCIVVRF (251 aa)) folds into the PPM-type phosphatase domain. Residues D69, G70, D234, and D273 each coordinate Mn(2+).

Belongs to the PP2C family. Mg(2+) serves as cofactor. It depends on Mn(2+) as a cofactor.

The enzyme catalyses O-phospho-L-seryl-[protein] + H2O = L-seryl-[protein] + phosphate. It catalyses the reaction O-phospho-L-threonyl-[protein] + H2O = L-threonyl-[protein] + phosphate. This is Probable protein phosphatase 2C 17 from Arabidopsis thaliana (Mouse-ear cress).